A 332-amino-acid polypeptide reads, in one-letter code: Delta-aminolevulinic acid dehydratase (332 aa).

Lys199 acts as the Schiff-base intermediate with substrate in catalysis. 5-aminolevulinate-binding residues include Arg209 and Lys221. Glu237 lines the Mg(2+) pocket. The active-site Schiff-base intermediate with substrate is the Lys252. 2 residues coordinate 5-aminolevulinate: Ser278 and Tyr317.

Belongs to the ALAD family. In terms of assembly, homooctamer.

It catalyses the reaction 2 5-aminolevulinate = porphobilinogen + 2 H2O + H(+). The protein operates within porphyrin-containing compound metabolism; protoporphyrin-IX biosynthesis; coproporphyrinogen-III from 5-aminolevulinate: step 1/4. Functionally, catalyzes an early step in the biosynthesis of tetrapyrroles. Binds two molecules of 5-aminolevulinate per subunit, each at a distinct site, and catalyzes their condensation to form porphobilinogen. In Chlamydia pneumoniae (Chlamydophila pneumoniae), this protein is Delta-aminolevulinic acid dehydratase (hemB).